The chain runs to 159 residues: Phosphopantetheine adenylyltransferase (159 aa).

Thr10 provides a ligand contact to substrate. ATP-binding positions include 10–11 (TF) and His18. Residues Lys42, Met74, and Arg88 each coordinate substrate. Residues 89 to 91 (GLR), Glu99, and 124 to 130 (WSFISSS) contribute to the ATP site.

This sequence belongs to the bacterial CoaD family. Homohexamer. Mg(2+) serves as cofactor.

The protein localises to the cytoplasm. The catalysed reaction is (R)-4'-phosphopantetheine + ATP + H(+) = 3'-dephospho-CoA + diphosphate. It participates in cofactor biosynthesis; coenzyme A biosynthesis; CoA from (R)-pantothenate: step 4/5. Its function is as follows. Reversibly transfers an adenylyl group from ATP to 4'-phosphopantetheine, yielding dephospho-CoA (dPCoA) and pyrophosphate. This is Phosphopantetheine adenylyltransferase from Salmonella arizonae (strain ATCC BAA-731 / CDC346-86 / RSK2980).